A 439-amino-acid chain; its full sequence is Damage-control phosphatase ARMT1 (439 aa).

A2 carries the N-acetylalanine modification. S4 is modified (phosphoserine). K40 is subject to N6-acetyllysine. Residues D251 and N252 each coordinate Mn(2+). 251-252 (DN) is a substrate binding site. S-adenosyl-L-methionine-binding residues include E256 and D289. D289 is a Mn(2+) binding site. Substrate contacts are provided by residues 365-369 (DLNYR) and K402. Residues 399–402 (RTLK) carry the Subfamily III RTxK motif motif.

This sequence belongs to the damage-control phosphatase family. Sugar phosphate phosphatase III subfamily. Requires Mn(2+) as cofactor. The cofactor is Ni(2+). Automethylated.

The enzyme catalyses beta-D-fructose 1-phosphate + H2O = D-fructose + phosphate. It carries out the reaction beta-D-fructose 6-phosphate = dihydroxyacetone + D-glyceraldehyde 3-phosphate. It catalyses the reaction L-glutamyl-[protein] + S-adenosyl-L-methionine = [protein]-L-glutamate 5-O-methyl ester + S-adenosyl-L-homocysteine. Its function is as follows. Metal-dependent phosphatase that shows phosphatase activity against several substrates, including fructose-1-phosphate and fructose-6-phosphate. Its preference for fructose-1-phosphate, a strong glycating agent that causes DNA damage rather than a canonical yeast metabolite, suggests a damage-control function in hexose phosphate metabolism. Has also been shown to have O-methyltransferase activity that methylates glutamate residues of target proteins to form gamma-glutamyl methyl ester residues. Possibly methylates PCNA, suggesting it is involved in the DNA damage response. This Rattus norvegicus (Rat) protein is Damage-control phosphatase ARMT1.